Here is a 621-residue protein sequence, read N- to C-terminus: Chaperone protein HtpG (621 aa).

The interval 1–328 is a; substrate-binding; it reads MTQEKKKFDA…SEDLPLNISR (328 aa). The tract at residues 329 to 544 is b; the sequence is ESLQHNSVLE…DSAMDIRMER (216 aa). Positions 475–495 are disordered; sequence SDIDVEQTTSQSEDKNTHSKK. A compositionally biased stretch (basic and acidic residues) spans 486–495; it reads SEDKNTHSKK. Residues 545-621 form a c region; the sequence is FLIEQKQITA…LNDIVQKAIL (77 aa).

The protein belongs to the heat shock protein 90 family. In terms of assembly, homodimer.

It localises to the cytoplasm. Functionally, molecular chaperone. Has ATPase activity. The protein is Chaperone protein HtpG of Rickettsia akari (strain Hartford).